A 126-amino-acid chain; its full sequence is Aspartate 1-decarboxylase (126 aa).

Catalysis depends on serine 25, which acts as the Schiff-base intermediate with substrate; via pyruvic acid. The residue at position 25 (serine 25) is a Pyruvic acid (Ser). Threonine 57 is a binding site for substrate. Tyrosine 58 (proton donor) is an active-site residue. A substrate-binding site is contributed by glycine 72–alanine 74.

The protein belongs to the PanD family. As to quaternary structure, heterooctamer of four alpha and four beta subunits. The cofactor is pyruvate. In terms of processing, is synthesized initially as an inactive proenzyme, which is activated by self-cleavage at a specific serine bond to produce a beta-subunit with a hydroxyl group at its C-terminus and an alpha-subunit with a pyruvoyl group at its N-terminus.

It localises to the cytoplasm. It catalyses the reaction L-aspartate + H(+) = beta-alanine + CO2. It participates in cofactor biosynthesis; (R)-pantothenate biosynthesis; beta-alanine from L-aspartate: step 1/1. Functionally, catalyzes the pyruvoyl-dependent decarboxylation of aspartate to produce beta-alanine. In Campylobacter jejuni subsp. jejuni serotype O:6 (strain 81116 / NCTC 11828), this protein is Aspartate 1-decarboxylase.